The chain runs to 271 residues: Structure-specific endonuclease subunit slx1 (271 aa).

Residues 5 to 87 (NFYCCYLLKS…QNLGISRYTK (83 aa)) form the GIY-YIG domain. The segment at 180-231 (CNLCYECIESDELRANCPFTDCNSINHLTCLASSFLTEECQVLPIEGMCTKC) adopts an SLX1-type zinc-finger fold.

This sequence belongs to the SLX1 family. Forms a heterodimer with slx4. The cofactor is Mg(2+). It depends on Mn(2+) as a cofactor.

It localises to the nucleus. Its subcellular location is the nucleolus. Functionally, catalytic subunit of the slx1-slx4 structure-specific endonuclease that resolves DNA secondary structures generated during DNA repair and recombination. Has endonuclease activity towards branched DNA substrates, introducing single-strand cuts in duplex DNA close to junctions with ss-DNA. Has a preference for stem-loop (SL) and splayed arm Y structures. Introduces a single-strand cut in duplex DNA on the 3' side of a double-strand/single-strand junction with respect to the single-strand moving 3' to 5' away from the junction. Plays a critical role in maintaining the integrity of the ribosomal DNA (rDNA) loci, where it has a role in re-starting stalled replication forks. The complex initiates homologous recombination (HR) events, used to maintain rDNA copy number, in the rDNA repeats that are processed by a mechanism that requires rad22, but not rhp51. It is also required for suppression of methyl methanesulfonate (MMS) and UV-C irradiation hypersensitivity of the structural maintenance of chromosome (SMC) protein mutant, smc6-74, by overexpression of brc1. Has Holliday junction resolvase activity in vitro. The protein is Structure-specific endonuclease subunit slx1 of Schizosaccharomyces pombe (strain 972 / ATCC 24843) (Fission yeast).